We begin with the raw amino-acid sequence, 397 residues long: Acetate kinase (397 aa).

A Mg(2+)-binding site is contributed by Asn-7. Residue Lys-14 participates in ATP binding. Residue Arg-90 coordinates substrate. Residue Asp-147 is the Proton donor/acceptor of the active site. ATP contacts are provided by residues His-207–Gly-211, Asp-282–Arg-284, and Gly-330–Asn-334. Glu-383 contacts Mg(2+).

This sequence belongs to the acetokinase family. As to quaternary structure, homodimer. Mg(2+) is required as a cofactor. It depends on Mn(2+) as a cofactor.

The protein localises to the cytoplasm. The enzyme catalyses acetate + ATP = acetyl phosphate + ADP. It functions in the pathway metabolic intermediate biosynthesis; acetyl-CoA biosynthesis; acetyl-CoA from acetate: step 1/2. Catalyzes the formation of acetyl phosphate from acetate and ATP. Can also catalyze the reverse reaction. The protein is Acetate kinase of Clostridium botulinum (strain Langeland / NCTC 10281 / Type F).